The sequence spans 322 residues: ATP-dependent 6-phosphofructokinase (322 aa).

Gly12 lines the ATP pocket. Position 22 to 26 (22 to 26 (RATAK)) interacts with ADP. Residues 73 to 74 (RS) and 103 to 106 (GDGS) each bind ATP. Asp104 contacts Mg(2+). Residue 127-129 (TID) participates in substrate binding. Asp129 serves as the catalytic Proton acceptor. An ADP-binding site is contributed by Arg156. Substrate is bound by residues Arg164 and 171–173 (MGR). ADP contacts are provided by residues 187-189 (GGD) and 215-217 (KLH). Substrate contacts are provided by residues Glu224, Arg245, and 251–254 (HIQR).

This sequence belongs to the phosphofructokinase type A (PFKA) family. ATP-dependent PFK group I subfamily. Prokaryotic clade 'B1' sub-subfamily. Homotetramer. Mg(2+) serves as cofactor.

Its subcellular location is the cytoplasm. It carries out the reaction beta-D-fructose 6-phosphate + ATP = beta-D-fructose 1,6-bisphosphate + ADP + H(+). It participates in carbohydrate degradation; glycolysis; D-glyceraldehyde 3-phosphate and glycerone phosphate from D-glucose: step 3/4. Allosterically activated by ADP and other diphosphonucleosides, and allosterically inhibited by phosphoenolpyruvate. Catalyzes the phosphorylation of D-fructose 6-phosphate to fructose 1,6-bisphosphate by ATP, the first committing step of glycolysis. The protein is ATP-dependent 6-phosphofructokinase of Fusobacterium nucleatum subsp. nucleatum (strain ATCC 25586 / DSM 15643 / BCRC 10681 / CIP 101130 / JCM 8532 / KCTC 2640 / LMG 13131 / VPI 4355).